The primary structure comprises 452 residues: Transcription factor ETV6 (452 aa).

Residue K11 is modified to N6-acetyllysine; alternate. Residue K11 forms a Glycyl lysine isopeptide (Lys-Gly) (interchain with G-Cter in SUMO2); alternate linkage. T18 carries the post-translational modification Phosphothreonine. At S22 the chain carries Phosphoserine. One can recognise a PNT domain in the interval 40–124 (ALRMEEDSIR…ELLQHILKQR (85 aa)). The tract at residues 154 to 262 (EDNGVQRTSR…PRPSSPRQEG (109 aa)) is disordered. Positions 158–174 (VQRTSRPSAENVHQNPP) are enriched in polar residues. Residues S213, S238, and S257 each carry the phosphoserine modification. K288 is covalently cross-linked (Glycyl lysine isopeptide (Lys-Gly) (interchain with G-Cter in SUMO2)). At K302 the chain carries N6-acetyllysine; alternate. Residue K302 forms a Glycyl lysine isopeptide (Lys-Gly) (interchain with G-Cter in SUMO2); alternate linkage. The residue at position 323 (S323) is a Phosphoserine. The ETS DNA-binding region spans 339–420 (RLLWDYVYQL…PGQRLLFRFM (82 aa)). Residues K403 and K421 each participate in a glycyl lysine isopeptide (Lys-Gly) (interchain with G-Cter in SUMO2) cross-link.

This sequence belongs to the ETS family. As to quaternary structure, can form homodimers or heterodimers with TEL2 or FLI1. Interacts with L3MBTL1 and HDAC9.

The protein resides in the nucleus. Its function is as follows. Transcriptional repressor; binds to the DNA sequence 5'-CCGGAAGT-3'. Plays a role in hematopoiesis and malignant transformation. The chain is Transcription factor ETV6 (ETV6) from Bos taurus (Bovine).